A 309-amino-acid polypeptide reads, in one-letter code: DNA-directed RNA polymerase subunit alpha (309 aa).

The alpha N-terminal domain (alpha-NTD) stretch occupies residues 1–225 (MFQVQCLESA…SLFKLVNSAD (225 aa)). Residues 237-309 (IVQVSQTDVT…LHERFNLTLN (73 aa)) form an alpha C-terminal domain (alpha-CTD) region.

This sequence belongs to the RNA polymerase alpha chain family. In terms of assembly, in plastids the minimal PEP RNA polymerase catalytic core is composed of four subunits: alpha, beta, beta', and beta''. When a (nuclear-encoded) sigma factor is associated with the core the holoenzyme is formed, which can initiate transcription.

It is found in the plastid. It localises to the chloroplast. The enzyme catalyses RNA(n) + a ribonucleoside 5'-triphosphate = RNA(n+1) + diphosphate. In terms of biological role, DNA-dependent RNA polymerase catalyzes the transcription of DNA into RNA using the four ribonucleoside triphosphates as substrates. The sequence is that of DNA-directed RNA polymerase subunit alpha from Emiliania huxleyi (Coccolithophore).